Here is a 138-residue protein sequence, read N- to C-terminus: Nucleoside diphosphate kinase (138 aa).

Residues Lys9, Phe57, Arg85, Thr91, Arg102, and Asn112 each coordinate ATP. The active-site Pros-phosphohistidine intermediate is the His115.

This sequence belongs to the NDK family. Homotetramer. Mg(2+) is required as a cofactor.

It is found in the cytoplasm. The enzyme catalyses a 2'-deoxyribonucleoside 5'-diphosphate + ATP = a 2'-deoxyribonucleoside 5'-triphosphate + ADP. It catalyses the reaction a ribonucleoside 5'-diphosphate + ATP = a ribonucleoside 5'-triphosphate + ADP. Major role in the synthesis of nucleoside triphosphates other than ATP. The ATP gamma phosphate is transferred to the NDP beta phosphate via a ping-pong mechanism, using a phosphorylated active-site intermediate. This Desulfatibacillum aliphaticivorans protein is Nucleoside diphosphate kinase.